The sequence spans 459 residues: Bifunctional protein GlmU (459 aa).

A pyrophosphorylase region spans residues 1–230 (MSNRFAVILA…FDETLGVNDR (230 aa)). UDP-N-acetyl-alpha-D-glucosamine-binding positions include 9–12 (LAAG), lysine 23, glutamine 73, and 78–79 (GT). A Mg(2+)-binding site is contributed by aspartate 103. 4 residues coordinate UDP-N-acetyl-alpha-D-glucosamine: glycine 140, glutamate 155, asparagine 170, and asparagine 228. Asparagine 228 serves as a coordination point for Mg(2+). A linker region spans residues 231 to 251 (VALSQAEIIMKNRINRKNMVN). Positions 252–459 (GVTIIDPSNT…VDQLLNKKKS (208 aa)) are N-acetyltransferase. Residues arginine 333 and lysine 351 each coordinate UDP-N-acetyl-alpha-D-glucosamine. Histidine 363 acts as the Proton acceptor in catalysis. Residues tyrosine 366 and asparagine 377 each coordinate UDP-N-acetyl-alpha-D-glucosamine. Acetyl-CoA-binding positions include 386-387 (NY), alanine 423, and arginine 440.

The protein in the N-terminal section; belongs to the N-acetylglucosamine-1-phosphate uridyltransferase family. It in the C-terminal section; belongs to the transferase hexapeptide repeat family. Homotrimer. Mg(2+) is required as a cofactor.

It is found in the cytoplasm. It carries out the reaction alpha-D-glucosamine 1-phosphate + acetyl-CoA = N-acetyl-alpha-D-glucosamine 1-phosphate + CoA + H(+). The enzyme catalyses N-acetyl-alpha-D-glucosamine 1-phosphate + UTP + H(+) = UDP-N-acetyl-alpha-D-glucosamine + diphosphate. The protein operates within nucleotide-sugar biosynthesis; UDP-N-acetyl-alpha-D-glucosamine biosynthesis; N-acetyl-alpha-D-glucosamine 1-phosphate from alpha-D-glucosamine 6-phosphate (route II): step 2/2. Its pathway is nucleotide-sugar biosynthesis; UDP-N-acetyl-alpha-D-glucosamine biosynthesis; UDP-N-acetyl-alpha-D-glucosamine from N-acetyl-alpha-D-glucosamine 1-phosphate: step 1/1. It participates in bacterial outer membrane biogenesis; LPS lipid A biosynthesis. Catalyzes the last two sequential reactions in the de novo biosynthetic pathway for UDP-N-acetylglucosamine (UDP-GlcNAc). The C-terminal domain catalyzes the transfer of acetyl group from acetyl coenzyme A to glucosamine-1-phosphate (GlcN-1-P) to produce N-acetylglucosamine-1-phosphate (GlcNAc-1-P), which is converted into UDP-GlcNAc by the transfer of uridine 5-monophosphate (from uridine 5-triphosphate), a reaction catalyzed by the N-terminal domain. In Bacillus thuringiensis subsp. konkukian (strain 97-27), this protein is Bifunctional protein GlmU.